We begin with the raw amino-acid sequence, 86 residues long: Cell division topological specificity factor (86 aa).

The protein belongs to the MinE family.

In terms of biological role, prevents the cell division inhibition by proteins MinC and MinD at internal division sites while permitting inhibition at polar sites. This ensures cell division at the proper site by restricting the formation of a division septum at the midpoint of the long axis of the cell. In Allorhizobium ampelinum (strain ATCC BAA-846 / DSM 112012 / S4) (Agrobacterium vitis (strain S4)), this protein is Cell division topological specificity factor.